A 468-amino-acid chain; its full sequence is ATP synthase subunit beta (468 aa).

153 to 160 contacts ATP; sequence GGAGVGKT.

It belongs to the ATPase alpha/beta chains family. As to quaternary structure, F-type ATPases have 2 components, CF(1) - the catalytic core - and CF(0) - the membrane proton channel. CF(1) has five subunits: alpha(3), beta(3), gamma(1), delta(1), epsilon(1). CF(0) has three main subunits: a(1), b(2) and c(9-12). The alpha and beta chains form an alternating ring which encloses part of the gamma chain. CF(1) is attached to CF(0) by a central stalk formed by the gamma and epsilon chains, while a peripheral stalk is formed by the delta and b chains.

The protein localises to the cell inner membrane. It carries out the reaction ATP + H2O + 4 H(+)(in) = ADP + phosphate + 5 H(+)(out). Functionally, produces ATP from ADP in the presence of a proton gradient across the membrane. The catalytic sites are hosted primarily by the beta subunits. This is ATP synthase subunit beta from Nautilia profundicola (strain ATCC BAA-1463 / DSM 18972 / AmH).